The sequence spans 273 residues: Imidazole glycerol phosphate synthase subunit HisF (273 aa).

Catalysis depends on residues Asp-11 and Asp-134.

This sequence belongs to the HisA/HisF family. As to quaternary structure, heterodimer of HisH and HisF.

It localises to the cytoplasm. The enzyme catalyses 5-[(5-phospho-1-deoxy-D-ribulos-1-ylimino)methylamino]-1-(5-phospho-beta-D-ribosyl)imidazole-4-carboxamide + L-glutamine = D-erythro-1-(imidazol-4-yl)glycerol 3-phosphate + 5-amino-1-(5-phospho-beta-D-ribosyl)imidazole-4-carboxamide + L-glutamate + H(+). Its pathway is amino-acid biosynthesis; L-histidine biosynthesis; L-histidine from 5-phospho-alpha-D-ribose 1-diphosphate: step 5/9. Functionally, IGPS catalyzes the conversion of PRFAR and glutamine to IGP, AICAR and glutamate. The HisF subunit catalyzes the cyclization activity that produces IGP and AICAR from PRFAR using the ammonia provided by the HisH subunit. This is Imidazole glycerol phosphate synthase subunit HisF from Methanosarcina mazei (strain ATCC BAA-159 / DSM 3647 / Goe1 / Go1 / JCM 11833 / OCM 88) (Methanosarcina frisia).